The primary structure comprises 581 residues: UvrABC system protein C (581 aa).

One can recognise a GIY-YIG domain in the interval 15–94 (REPGVYLFEQ…IKRHRPPYNV (80 aa)). The UVR domain occupies 202–237 (GVLADPLRREMEAAAQNQEFERAANLRDKLGAVEAL).

The protein belongs to the UvrC family. As to quaternary structure, interacts with UvrB in an incision complex.

It is found in the cytoplasm. In terms of biological role, the UvrABC repair system catalyzes the recognition and processing of DNA lesions. UvrC both incises the 5' and 3' sides of the lesion. The N-terminal half is responsible for the 3' incision and the C-terminal half is responsible for the 5' incision. The polypeptide is UvrABC system protein C (Haloarcula marismortui (strain ATCC 43049 / DSM 3752 / JCM 8966 / VKM B-1809) (Halobacterium marismortui)).